Reading from the N-terminus, the 211-residue chain is ATP phosphoribosyltransferase (211 aa).

It belongs to the ATP phosphoribosyltransferase family. Short subfamily. In terms of assembly, heteromultimer composed of HisG and HisZ subunits.

It is found in the cytoplasm. The catalysed reaction is 1-(5-phospho-beta-D-ribosyl)-ATP + diphosphate = 5-phospho-alpha-D-ribose 1-diphosphate + ATP. The protein operates within amino-acid biosynthesis; L-histidine biosynthesis; L-histidine from 5-phospho-alpha-D-ribose 1-diphosphate: step 1/9. Its function is as follows. Catalyzes the condensation of ATP and 5-phosphoribose 1-diphosphate to form N'-(5'-phosphoribosyl)-ATP (PR-ATP). Has a crucial role in the pathway because the rate of histidine biosynthesis seems to be controlled primarily by regulation of HisG enzymatic activity. This is ATP phosphoribosyltransferase from Pseudomonas putida (strain ATCC 47054 / DSM 6125 / CFBP 8728 / NCIMB 11950 / KT2440).